The primary structure comprises 455 residues: Maintenance of telomere capping protein 1 (455 aa).

2 disordered regions span residues 1–113 and 296–317; these read MAET…SATP and AKKM…EDAS. Over residues 27-38 the composition is skewed to basic and acidic residues; it reads PTSKEFNNDDSK. Over residues 80 to 113 the composition is skewed to polar residues; it reads VAATSNERQQHDASNQPSQAAQTTINKNTESATP. Residues 296–305 show a composition bias toward basic and acidic residues; the sequence is AKKMNKENKQ.

This sequence belongs to the MTC1 family.

It localises to the cytoplasm. Its function is as follows. Involved in telomere capping. The protein is Maintenance of telomere capping protein 1 of Schizosaccharomyces pombe (strain 972 / ATCC 24843) (Fission yeast).